We begin with the raw amino-acid sequence, 550 residues long: Pectinesterase 2.2 (550 aa).

A glycan (N-linked (GlcNAc...) asparagine) is linked at N179. Substrate-binding residues include T312 and Q342. A disulfide bond links C331 and C358. D365 functions as the Proton donor in the catalytic mechanism. The active-site Nucleophile is the D386. C399 and C433 form a disulfide bridge. Substrate-binding residues include R454 and W456.

The protein in the N-terminal section; belongs to the PMEI family. It in the C-terminal section; belongs to the pectinesterase family.

It localises to the secreted. The protein resides in the cell wall. The enzyme catalyses [(1-&gt;4)-alpha-D-galacturonosyl methyl ester](n) + n H2O = [(1-&gt;4)-alpha-D-galacturonosyl](n) + n methanol + n H(+). Its pathway is glycan metabolism; pectin degradation; 2-dehydro-3-deoxy-D-gluconate from pectin: step 1/5. Its function is as follows. Pectinesterase may play a role in cell wall metabolism during fruit growth and development prior to ripening and may be required for preparing cell walls for softening by polygalacturonase during fruit ripening. The polypeptide is Pectinesterase 2.2 (PME2.2) (Solanum lycopersicum (Tomato)).